Consider the following 196-residue polypeptide: GTP cyclohydrolase-2 (196 aa).

49 to 53 is a GTP binding site; that stretch reads RIHSE. Residues cysteine 54, cysteine 65, and cysteine 67 each contribute to the Zn(2+) site. GTP-binding positions include glutamine 70, 92 to 94, and threonine 114; that span reads EGR. Aspartate 126 functions as the Proton acceptor in the catalytic mechanism. The active-site Nucleophile is arginine 128. Residues threonine 149 and lysine 154 each contribute to the GTP site.

Belongs to the GTP cyclohydrolase II family. Homodimer. Zn(2+) is required as a cofactor.

It catalyses the reaction GTP + 4 H2O = 2,5-diamino-6-hydroxy-4-(5-phosphoribosylamino)-pyrimidine + formate + 2 phosphate + 3 H(+). The protein operates within cofactor biosynthesis; riboflavin biosynthesis; 5-amino-6-(D-ribitylamino)uracil from GTP: step 1/4. Functionally, catalyzes the conversion of GTP to 2,5-diamino-6-ribosylamino-4(3H)-pyrimidinone 5'-phosphate (DARP), formate and pyrophosphate. This Buchnera aphidicola subsp. Schizaphis graminum (strain Sg) protein is GTP cyclohydrolase-2.